The following is a 318-amino-acid chain: Protoheme IX farnesyltransferase (318 aa).

The next 9 helical transmembrane spans lie at 27–47 (IMML…GMTG), 52–72 (PAMA…AGAI), 103–123 (LTMG…ASNW), 124–144 (LAAA…TMWL), 152–172 (IVIG…AVTG), 179–199 (WILF…LSLL), 225–245 (ILVY…TGLG), 248–268 (IYGA…VAIL), and 288–308 (AFLF…VEHA).

Belongs to the UbiA prenyltransferase family. Protoheme IX farnesyltransferase subfamily. Interacts with CtaA.

The protein resides in the cell inner membrane. It catalyses the reaction heme b + (2E,6E)-farnesyl diphosphate + H2O = Fe(II)-heme o + diphosphate. The protein operates within porphyrin-containing compound metabolism; heme O biosynthesis; heme O from protoheme: step 1/1. Functionally, converts heme B (protoheme IX) to heme O by substitution of the vinyl group on carbon 2 of heme B porphyrin ring with a hydroxyethyl farnesyl side group. This is Protoheme IX farnesyltransferase from Hyphomonas neptunium (strain ATCC 15444).